The following is an 874-amino-acid chain: Cap-specific mRNA (nucleoside-2'-O-)-methyltransferase 1A (874 aa).

A compositionally biased stretch (basic and acidic residues) spans 1–10 (MSERGDDDRT). Positions 1–64 (MSERGDDDRT…APPTKQKTKA (64 aa)) are disordered. The G-patch domain occupies 60–106 (QKTKAEEMMERMGYKAGEGLGKNKQGIQEPVALSTQRGKTGLGHEGA). Positions 211-440 (FFQNRAAMKT…ERYITCKGLR (230 aa)) constitute a RrmJ-type SAM-dependent 2'-O-MTase domain. Glycine 273 and aspartate 354 together coordinate S-adenosyl-L-methionine. Lysine 394 serves as the catalytic Proton acceptor. Positions 535–555 (PNKQRPRGGDRGSRNGNQERL) are disordered.

It carries out the reaction a 5'-end (N(7)-methyl 5'-triphosphoguanosine)-ribonucleoside in mRNA + S-adenosyl-L-methionine = a 5'-end (N(7)-methyl 5'-triphosphoguanosine)-(2'-O-methyl-ribonucleoside) in mRNA + S-adenosyl-L-homocysteine + H(+). In terms of biological role, S-adenosyl-L-methionine-dependent methyltransferase that mediates mRNA cap1 2'-O-ribose methylation to the 5'-cap structure of mRNAs. Methylates the ribose of the first nucleotide of a m(7)GpppG-capped mRNA to produce m(7)GpppNmp (cap1). Cap1 modification is linked to higher levels of translation. In Caenorhabditis briggsae, this protein is Cap-specific mRNA (nucleoside-2'-O-)-methyltransferase 1A.